The primary structure comprises 128 residues: uncharacterized protein (128 aa).

The tract at residues 25 to 61 (LPNRLPEGSTVGPKPDSSWEAGSQGNWGLTSSGAGQD) is disordered. Residues 44 to 61 (EAGSQGNWGLTSSGAGQD) show a composition bias toward polar residues.

This is an uncharacterized protein from Homo sapiens (Human).